Consider the following 729-residue polypeptide: Cullin-6 (729 aa).

In terms of domain architecture, Cullin neddylation spans 659–720 (DRKYEIKACI…EQLYIRRSEN (62 aa)). Lys-673 is covalently cross-linked (Glycyl lysine isopeptide (Lys-Gly) (interchain with G-Cter in NEDD8)).

The protein belongs to the cullin family. As to quaternary structure, probably interacts with skr-3. Post-translationally, neddylated; which enhances the ubiquitination activity of SCF-like complex.

Its function is as follows. Probable core component of cullin-based SCF-like E3 ubiquitin-protein ligase complexes which mediate the ubiquitination and subsequent proteasomal degradation of target proteins. The chain is Cullin-6 (cul-6) from Caenorhabditis elegans.